We begin with the raw amino-acid sequence, 316 residues long: CD276 antigen (316 aa).

A signal peptide spans 1–28; sequence MLRGWGGPSVGVCVRTALGVLCLCLTGA. The region spanning 29 to 139 is the Ig-like V-type domain; sequence VEVQVSEDPV…DSAAVSLQVA (111 aa). The Extracellular segment spans residues 29-248; that stretch reads VEVQVSEDPV…GQPLTFPPEA (220 aa). N-linked (GlcNAc...) asparagine glycans are attached at residues Asn-104, Asn-189, and Asn-215. The Ig-like C2-type domain maps to 145–238; the sequence is PSMTLEPNKD…QDAHGSVTIT (94 aa). Cys-165 and Cys-220 form a disulfide bridge. The chain crosses the membrane as a helical span at residues 249–269; the sequence is LWVTVGLSVCLVVLLVALAFV. Over 270–316 the chain is Cytoplasmic; the sequence is CWRKIKQSCEEENAGAEDQDGDGEGSKTALRPLKPSENKEDDGQEIA. Residues 280 to 292 are compositionally biased toward acidic residues; that stretch reads EENAGAEDQDGDG. Residues 280-316 are disordered; it reads EENAGAEDQDGDGEGSKTALRPLKPSENKEDDGQEIA.

The protein belongs to the immunoglobulin superfamily. BTN/MOG family. As to quaternary structure, interacts with TREML2 and this interaction enhances T-cell activation. Ubiquitous.

It is found in the membrane. Functionally, modulates T-cell-mediated immune responses and the development of acute and chronic transplant rejection. Plays a positive regulatory role in bone formation and has a dual role in the bone-immune interface. Induces antitumor immunity as it activates both acquired and innate immunity leading to natural killer cell and CD8 T-cell dependent killing of tumor cells. In Mus musculus (Mouse), this protein is CD276 antigen (Cd276).